A 122-amino-acid polypeptide reads, in one-letter code: Ribosome-binding factor A (122 aa).

The protein belongs to the RbfA family. In terms of assembly, monomer. Binds 30S ribosomal subunits, but not 50S ribosomal subunits or 70S ribosomes.

It is found in the cytoplasm. Its function is as follows. One of several proteins that assist in the late maturation steps of the functional core of the 30S ribosomal subunit. Associates with free 30S ribosomal subunits (but not with 30S subunits that are part of 70S ribosomes or polysomes). Required for efficient processing of 16S rRNA. May interact with the 5'-terminal helix region of 16S rRNA. This chain is Ribosome-binding factor A, found in Polaromonas naphthalenivorans (strain CJ2).